Here is a 544-residue protein sequence, read N- to C-terminus: MAAKDVQFGNEVRQKMVNGVNILANAVRVTLGPKGRNVVVDRAFGGPHITKDGVTVAKEIELKDKFENMGAQMVKEVASKTNDVAGDGTTTATVLAQSIVAEGMKYVTAGMNPTDLKRGIDKAVAALVEELKNIAKPCDTSKEIAQVGSISANSDEQVGAIIAEAMEKVGKEGVITVEDGKSLENELDVVEGMQFDRGYLSPYFINDAEKQIAGLDNPFVLLFDKKISNIRDLLPVLEQVAKASRPLLIIAEDVEGEALATLVVNNIRGILKTVAVKAPGFGDRRKAMLQDIAILTGGTVISEEVGLSLEKATLDDLGQAKRIEIGKENTTIIDGFGDAAQIEARVAEIRQQIETATSDYDKEKLQERVAKLAGGVAVIKVGAATEVEMKEKKDRVEDALHATRAAVEEGVVAGGGVALLRARAALENLHTGNADQDAGVQIVLRAVESPLRQIVANAGGEPSVVVNKVLEGKGNYGYNAGSGEYGDMIEMGVLDPAKVTRSALQHAASIAGLMLTTDCMIAEIPEDKPAMPDMGGMGGMGGMM.

ATP contacts are provided by residues 30-33, Lys51, 87-91, Gly415, and Asp495; these read TLGP and DGTTT.

The protein belongs to the chaperonin (HSP60) family. Forms a cylinder of 14 subunits composed of two heptameric rings stacked back-to-back. Interacts with the co-chaperonin GroES.

Its subcellular location is the cytoplasm. The catalysed reaction is ATP + H2O + a folded polypeptide = ADP + phosphate + an unfolded polypeptide.. Together with its co-chaperonin GroES, plays an essential role in assisting protein folding. The GroEL-GroES system forms a nano-cage that allows encapsulation of the non-native substrate proteins and provides a physical environment optimized to promote and accelerate protein folding. This Neisseria meningitidis serogroup A / serotype 4A (strain DSM 15465 / Z2491) protein is Chaperonin GroEL.